Consider the following 505-residue polypeptide: Autophagy-related protein 18 (505 aa).

WD repeat units lie at residues 246-286 (AHKG…KLYQ) and 291-330 (TYPT…EERT). Residues 287-291 (FRRGT) carry the L/FRRG motif motif. A disordered region spans residues 328-380 (ERTSGGADDADSDDSGNENDGDNNSVGNGDVSSLLSDNDIESTREPYVDASRK). A compositionally biased stretch (acidic residues) spans 335-348 (DDADSDDSGNENDG). Residues 349–360 (DNNSVGNGDVSS) show a composition bias toward low complexity. Positions 368-379 (ESTREPYVDASR) are enriched in basic and acidic residues.

It belongs to the WD repeat PROPPIN family. Component of the PI(3,5)P2 regulatory complex.

It is found in the preautophagosomal structure membrane. The protein localises to the vacuole membrane. Its subcellular location is the endosome membrane. Its function is as follows. The PI(3,5)P2 regulatory complex regulates both the synthesis and turnover of phosphatidylinositol 3,5-bisphosphate (PtdIns(3,5)P2). Necessary for proper vacuole morphology. Plays an important role in osmotically-induced vacuole fragmentation. Required for cytoplasm to vacuole transport (Cvt) vesicle formation, pexophagy and starvation-induced autophagy. Involved in correct ATG9 trafficking to the pre-autophagosomal structure. Might also be involved in premeiotic DNA replication. In Candida glabrata (strain ATCC 2001 / BCRC 20586 / JCM 3761 / NBRC 0622 / NRRL Y-65 / CBS 138) (Yeast), this protein is Autophagy-related protein 18 (ATG18).